A 195-amino-acid polypeptide reads, in one-letter code: Achaete-scute homolog 1b (195 aa).

The bHLH domain occupies 66–118 (MAVARRNERERNRVKQVNMGFQTLRQHVPNGAANKKMSKVETLRSAVEYIRAL). The interval 141 to 164 (VSNAYSAGPESPHSAYSSDEGSYE) is disordered.

In terms of assembly, efficient DNA binding requires dimerization with another bHLH protein. As to expression, in the 24 hours embryo, expressed in hindbrain close to the anterior and posterior boundaries of rhombomeres 2-6 and in ventral cells close to the floor plate of most rhombomeres. Also expressed in the telencephalon, diencephalon, tegmentum and spinal cord at sites distinct from those expressing ascl1a. Not expressed in the adenohypophysis.

It localises to the nucleus. Transcriptional regulator. May mediate transcription activation by binding to the E box-containing promoter. Involved in neurogenesis. Involved in maintaining rhombomere boundaries in the hindbrain, probably via up-regulation of delta expression. May mediate transcription activation by binding to the E box-containing promoter. In Danio rerio (Zebrafish), this protein is Achaete-scute homolog 1b.